Here is an 801-residue protein sequence, read N- to C-terminus: Phenylalanine--tRNA ligase beta subunit (801 aa).

The tRNA-binding domain occupies 39–147; that stretch reads GGGLDEVVVA…TDLPLGVPVF (109 aa). In terms of domain architecture, B5 spans 401 to 477; that stretch reads LPRRTVRFRV…RLNGYNNIPV (77 aa). Mg(2+) is bound by residues Asp-455, Asp-461, Glu-464, and Glu-465. Positions 708–801 constitute an FDX-ACB domain; the sequence is SRFPDTFRDI…LVKKLAVTIR (94 aa).

It belongs to the phenylalanyl-tRNA synthetase beta subunit family. Type 1 subfamily. Tetramer of two alpha and two beta subunits. Mg(2+) serves as cofactor.

The protein resides in the cytoplasm. The catalysed reaction is tRNA(Phe) + L-phenylalanine + ATP = L-phenylalanyl-tRNA(Phe) + AMP + diphosphate + H(+). This Geobacter metallireducens (strain ATCC 53774 / DSM 7210 / GS-15) protein is Phenylalanine--tRNA ligase beta subunit.